The sequence spans 729 residues: FYN-binding protein 2 (729 aa).

4 disordered regions span residues 18 to 130, 170 to 320, 371 to 408, and 469 to 490; these read KFNA…EEKG, EGQK…SAEL, ELSP…PPKV, and VTKE…KTYD. Polar residues-rich tracts occupy residues 69 to 81, 89 to 99, 190 to 216, and 226 to 240; these read GVSQ…TLKS, KTSSSSGTPEK, GAQT…SSVS, and KSPA…SQCQ. Pro residues predominate over residues 275-284; the sequence is GPPPPKPSKP. Residues 374-402 are compositionally biased toward basic and acidic residues; the sequence is PRPKEEENTMEEKESWESEPLEPRKELHP. Low complexity predominate over residues 473-485; the sequence is TPSPSTIRSSSSS. Tyrosine 489 is subject to Phosphotyrosine. The SH2-binding; to LCP2 motif lies at 520–523; sequence YEDI. The tract at residues 576–603 is disordered; it reads DLGPRSQDDSQDGIIYDDVDTREKESND. A compositionally biased stretch (acidic residues) spans 584–593; the sequence is DSQDGIIYDD. Tyrosine 591 bears the Phosphotyrosine mark. Residues 594-603 are compositionally biased toward basic and acidic residues; the sequence is VDTREKESND. Positions 668–728 constitute an SH3 domain; that stretch reads LVINRAVACA…LVEHLDFKHQ (61 aa).

As to quaternary structure, interacts with SKAP1, LCK and FYN. The phosphorylated form interacts with LCP2. In terms of processing, phosphorylation is required for its function in T-cell activation.

The protein localises to the membrane raft. Adapter protein that plays a role in T-cell receptor (TCR)-mediated activation of signaling pathways. Required for T-cell activation and integrin-mediated T-cell adhesion in response to TCR stimulation. The chain is FYN-binding protein 2 from Mus musculus (Mouse).